Here is a 1133-residue protein sequence, read N- to C-terminus: Roquin-1 (1133 aa).

Zn(2+)-binding residues include Cys-14, Cys-17, Cys-33, His-35, Cys-38, Cys-50, and Asp-53. An RING-type; degenerate zinc finger spans residues Cys-14–Gln-54. The interval Gly-89–His-173 is HEPN-N. An ROQ region spans residues Gln-174–Thr-326. The interval Pro-327 to Gln-396 is HEPN-C. Residues Lys-413–Glu-441 form a C3H1-type zinc finger. 4 positions are modified to phosphoserine: Ser-462, Ser-531, Ser-535, and Ser-863. The interval Thr-505–Ser-542 is disordered. Disordered stretches follow at residues Asn-1000 to Met-1019, Asn-1058 to Asp-1078, and Gln-1094 to Pro-1133. Over residues Gln-1007–Trp-1016 the composition is skewed to pro residues. The span at Asn-1058–Pro-1070 shows a compositional bias: polar residues. Positions Asn-1096–Ser-1110 are enriched in low complexity. Ser-1110 carries the post-translational modification Phosphoserine. Residues Asn-1119–Pro-1133 are compositionally biased toward polar residues.

In terms of assembly, able to homodimerize. Interacts with DDX6 and EDC4. Interacts with CCR4-NOT deadenylase complex. Interacts with RC3H1; the interaction is RNA independent. Proteolytically cleaved after Arg-510 and Arg-579 by MALT1 in activated CD4(+) T cells; cleavage at Arg-510 and Arg-579 is critical for promoting RC3H1 degradation in response to T-cell receptor (TCR) stimulation, and hence is necessary for prolonging the stability of a set of mRNAs controlling Th17 cell differentiation. In terms of tissue distribution, widely expressed. Expressed at higher level in cerebellum, spleen, ovary and liver.

It is found in the cytoplasm. The protein localises to the P-body. Its subcellular location is the cytoplasmic granule. The catalysed reaction is S-ubiquitinyl-[E2 ubiquitin-conjugating enzyme]-L-cysteine + [acceptor protein]-L-lysine = [E2 ubiquitin-conjugating enzyme]-L-cysteine + N(6)-ubiquitinyl-[acceptor protein]-L-lysine.. Its pathway is protein modification; protein ubiquitination. In terms of biological role, post-transcriptional repressor of mRNAs containing a conserved stem loop motif, called constitutive decay element (CDE), which is often located in the 3'-UTR, as in HMGXB3, ICOS, IER3, NFKBID, NFKBIZ, PPP1R10, TNF, TNFRSF4 and in many more mRNAs. Cleaves translationally inactive mRNAs harboring a stem-loop (SL), often located in their 3'-UTRs, during the early phase of inflammation in a helicase UPF1-independent manner. Binds to CDE and promotes mRNA deadenylation and degradation. This process does not involve miRNAs. In follicular helper T (Tfh) cells, represses of ICOS and TNFRSF4 expression, thus preventing spontaneous Tfh cell differentiation, germinal center B-cell differentiation in the absence of immunization and autoimmunity. In resting or LPS-stimulated macrophages, controls inflammation by suppressing TNF expression. Also recognizes CDE in its own mRNA and in that of paralogous RC3H2, possibly leading to feedback loop regulation. Recognizes and binds mRNAs containing a hexaloop stem-loop motif, called alternative decay element (ADE). Together with ZC3H12A, destabilizes TNFRSF4/OX40 mRNA by binding to the conserved stem loop structure in its 3'UTR. Able to interact with double-stranded RNA (dsRNA). miRNA-binding protein that regulates microRNA homeostasis. Enhances DICER-mediated processing of pre-MIR146a but reduces mature MIR146a levels through an increase of 3' end uridylation. Both inhibits ICOS mRNA expression and they may act together to exert the suppression. Acts as a ubiquitin E3 ligase. Pairs with E2 enzymes UBE2A, UBE2B, UBE2D2, UBE2F, UBE2G1, UBE2G2 and UBE2L3 and produces polyubiquitin chains. Shows the strongest activity when paired with UBE2N:UBE2V1 or UBE2N:UBE2V2 E2 complexes and generate both short and long polyubiquitin chains. This is Roquin-1 from Homo sapiens (Human).